The chain runs to 397 residues: uncharacterized protein (397 aa).

C47, C53, C56, and C131 together coordinate [4Fe-4S] cluster. The S-adenosyl-L-methionine site is built by Q235, F262, E282, and D328. C354 (nucleophile) is an active-site residue.

Belongs to the class I-like SAM-binding methyltransferase superfamily. RNA M5U methyltransferase family.

This is an uncharacterized protein from Zymomonas mobilis subsp. mobilis (strain ATCC 31821 / ZM4 / CP4).